A 408-amino-acid polypeptide reads, in one-letter code: Repulsive guidance molecule B homolog drag-1 (408 aa).

An N-terminal signal peptide occupies residues 1-22 (MSIVYLVSITFIFSVFKPITSC). The Extracellular segment spans residues 23 to 387 (RVEECAAWFQ…SEIFKKCIPS (365 aa)). Asparagine 60, asparagine 134, asparagine 183, and asparagine 376 each carry an N-linked (GlcNAc...) asparagine glycan. A helical membrane pass occupies residues 388–408 (KSIRFYPFLAIFFFALLSLLC).

The protein belongs to the repulsive guidance molecule (RGM) family. In terms of assembly, interacts with unc-40 (via FN6 domain), dbl-1 and sma-6. Expressed in pharyngeal, hypodermal and intestinal cells.

Its subcellular location is the cell membrane. Probably in association with the cell surface receptor unc-40, positively modulates the BMP-like Sma/Mab signaling pathway through interaction with both the ligand dbl-1 and its type I receptor sma-6. Regulates body size and this may be through modulation of the Sma/Mab signaling pathway. The sequence is that of Repulsive guidance molecule B homolog drag-1 from Caenorhabditis elegans.